The chain runs to 406 residues: [Pyruvate dehydrogenase (acetyl-transferring)] kinase isozyme 3, mitochondrial (406 aa).

Residues 131 to 362 form the Histidine kinase domain; it reads IEYKEKFGFD…DAVIYLKALS (232 aa). 247–254 is a binding site for ATP; that stretch reads ELFKNSMR. Position 278 is an N6-succinyllysine (K278). Residues D287, 306–307, and 323–328 contribute to the ATP site; these read ST and GFGYGL. The segment at 383 to 406 is disordered; it reads TPEADDWSNPSSEPRDASKYKAKQ. A compositionally biased stretch (basic and acidic residues) spans 395-406; it reads EPRDASKYKAKQ.

It belongs to the PDK/BCKDK protein kinase family. As to quaternary structure, homodimer. Interacts with the pyruvate dehydrogenase complex subunit DLAT, and is part of the multimeric pyruvate dehydrogenase complex that contains multiple copies of pyruvate dehydrogenase (E1), dihydrolipoamide acetyltransferase (DLAT, E2) and lipoamide dehydrogenase (DLD, E3). In terms of tissue distribution, expressed in heart, skeletal muscle, spinal cord, as well as fetal and adult brain.

It is found in the mitochondrion matrix. It carries out the reaction L-seryl-[pyruvate dehydrogenase E1 alpha subunit] + ATP = O-phospho-L-seryl-[pyruvate dehydrogenase E1 alpha subunit] + ADP + H(+). Activated by interaction with DLAT. Inhibited by AZD7545, dichloroacetate and radicicol. In terms of biological role, inhibits pyruvate dehydrogenase activity by phosphorylation of the E1 subunit PDHA1, and thereby regulates glucose metabolism and aerobic respiration. Can also phosphorylate PDHA2. Decreases glucose utilization and increases fat metabolism in response to prolonged fasting, and as adaptation to a high-fat diet. Plays a role in glucose homeostasis and in maintaining normal blood glucose levels in function of nutrient levels and under starvation. Plays a role in the generation of reactive oxygen species. The polypeptide is [Pyruvate dehydrogenase (acetyl-transferring)] kinase isozyme 3, mitochondrial (PDK3) (Homo sapiens (Human)).